Consider the following 72-residue polypeptide: DNA-directed RNA polymerase subunit omega (72 aa).

It belongs to the RNA polymerase subunit omega family. As to quaternary structure, the RNAP catalytic core consists of 2 alpha, 1 beta, 1 beta' and 1 omega subunit. When a sigma factor is associated with the core the holoenzyme is formed, which can initiate transcription.

It catalyses the reaction RNA(n) + a ribonucleoside 5'-triphosphate = RNA(n+1) + diphosphate. Its function is as follows. Promotes RNA polymerase assembly. Latches the N- and C-terminal regions of the beta' subunit thereby facilitating its interaction with the beta and alpha subunits. The protein is DNA-directed RNA polymerase subunit omega of Campylobacter lari (strain RM2100 / D67 / ATCC BAA-1060).